Reading from the N-terminus, the 316-residue chain is Tetrahydromethanopterin S-methyltransferase subunit H (316 aa).

The protein belongs to the MtrH family. As to quaternary structure, the complex is composed of 8 subunits; MtrA, MtrB, MtrC, MtrD, MtrE, MtrF, MtrG and MtrH.

The catalysed reaction is 5-methyl-5,6,7,8-tetrahydromethanopterin + coenzyme M + 2 Na(+)(in) = 5,6,7,8-tetrahydromethanopterin + methyl-coenzyme M + 2 Na(+)(out). It participates in one-carbon metabolism; methanogenesis from CO(2); methyl-coenzyme M from 5,10-methylene-5,6,7,8-tetrahydromethanopterin: step 2/2. Functionally, part of a complex that catalyzes the formation of methyl-coenzyme M and tetrahydromethanopterin from coenzyme M and methyl-tetrahydromethanopterin. This is an energy-conserving, sodium-ion translocating step. MtrH catalyzes the transfer of the methyl group from methyl-tetrahydromethanopterin to the corrinoid prosthetic group of MtrA. This Methanosarcina acetivorans (strain ATCC 35395 / DSM 2834 / JCM 12185 / C2A) protein is Tetrahydromethanopterin S-methyltransferase subunit H.